Reading from the N-terminus, the 84-residue chain is MNNDLQPIVLVDEEGIETTFNVVTKLDIEEKEYFLLSPEGEEDVVIAMQVVQDEDGEETLAPVENDFEIEMIEEAYATLFAEEE.

Belongs to the UPF0473 family.

This Clostridium perfringens (strain ATCC 13124 / DSM 756 / JCM 1290 / NCIMB 6125 / NCTC 8237 / Type A) protein is UPF0473 protein CPF_2030.